A 427-amino-acid polypeptide reads, in one-letter code: Tol-Pal system protein TolB (427 aa).

Residues 1–23 (MKLIARLMSMCAVLFFAINSAYA) form the signal peptide.

This sequence belongs to the TolB family. In terms of assembly, the Tol-Pal system is composed of five core proteins: the inner membrane proteins TolA, TolQ and TolR, the periplasmic protein TolB and the outer membrane protein Pal. They form a network linking the inner and outer membranes and the peptidoglycan layer.

The protein resides in the periplasm. In terms of biological role, part of the Tol-Pal system, which plays a role in outer membrane invagination during cell division and is important for maintaining outer membrane integrity. This is Tol-Pal system protein TolB from Actinobacillus succinogenes (strain ATCC 55618 / DSM 22257 / CCUG 43843 / 130Z).